We begin with the raw amino-acid sequence, 915 residues long: Alpha-xylosidase 1 (915 aa).

An N-terminal signal peptide occupies residues 1-27 (MASSSSSLAFSLSLLLALILCFSPTQS). Asn153, Asn304, and Asn375 each carry an N-linked (GlcNAc...) asparagine glycan. Residues Asp440 and Glu443 contribute to the active site. Asn476 and Asn490 each carry an N-linked (GlcNAc...) asparagine glycan. Asp563 (proton donor) is an active-site residue. N-linked (GlcNAc...) asparagine glycosylation is found at Asn819, Asn888, and Asn907.

It belongs to the glycosyl hydrolase 31 family. In terms of tissue distribution, expressed in roots, stems, leaves, flowers and siliques. Expressed in cell types undergoing cell wall modifications, including trichomes, vasculature, stomata, and elongating anther filaments. Not detected in pollen.

The protein resides in the secreted. It is found in the cell wall. It localises to the extracellular space. Its subcellular location is the apoplast. The catalysed reaction is Hydrolysis of terminal, non-reducing alpha-D-xylose residues with release of alpha-D-xylose.. Its function is as follows. Glycoside hydrolase releasing xylosyl residues from xyloglucan oligosaccharides at the non-reducing end. Has alpha-xylosidase activity against xylan oligosaccharides. Also has alpha-glucosidase activity against p-nitrophenyl-alpha-D-glucopyranoside. No activity against p-nitrophenyl-D-xyloside. This Arabidopsis thaliana (Mouse-ear cress) protein is Alpha-xylosidase 1.